The following is a 355-amino-acid chain: Probable tRNA-dihydrouridine synthase 1 (355 aa).

Residues 48–50 (PLS) and Gln102 each bind FMN. Cys132 functions as the Proton donor in the catalytic mechanism. FMN is bound by residues Lys171, 232–234 (NGD), and 256–257 (SR).

Belongs to the Dus family. The cofactor is FMN.

The enzyme catalyses a 5,6-dihydrouridine in tRNA + NAD(+) = a uridine in tRNA + NADH + H(+). It carries out the reaction a 5,6-dihydrouridine in tRNA + NADP(+) = a uridine in tRNA + NADPH + H(+). Functionally, catalyzes the synthesis of 5,6-dihydrouridine (D), a modified base found in the D-loop of most tRNAs, via the reduction of the C5-C6 double bond in target uridines. The chain is Probable tRNA-dihydrouridine synthase 1 (dus1) from Synechocystis sp. (strain ATCC 27184 / PCC 6803 / Kazusa).